A 379-amino-acid chain; its full sequence is MGFAPLLVFSLFVFAGTTKGFICSFDSIYQLGDSFSDTGNLIRQPPDGPTFCSAHFPYGETFPGMPTGRCSDGRLIIDFIATALNLPLLNPYLQQNVSFRHGVNFAVGGATALDLSFLAARGVQVYDVHSPLSTQLKWFRTYLGSICSSPKECSNKLKNALFILGNIGNNDVNYAFPNRSIEEIRAYLPFITEAVANATREIIRLGGTRVIVPGMFPLGCLARNLYFFPDGDKDDLGCLSSLNDLSIYFNSLIQQALASLRIEFPQAVIIYADYYNAWGFLFRNGPALGFNSTTMLKCCCGIGGPYNYDPDRECASQGVPVCSNPTEYIQWDGTHFTQAAYRRVAEYIIPDIIKELKCSYSSIQHLTEGREALHINERE.

The N-terminal stretch at 1 to 20 (MGFAPLLVFSLFVFAGTTKG) is a signal peptide. The active-site Nucleophile is S34. N-linked (GlcNAc...) asparagine glycosylation is found at N96, N178, N197, and N291. Catalysis depends on residues D332 and H335.

It belongs to the 'GDSL' lipolytic enzyme family. As to expression, expressed in roots and leaves at low levels.

The enzyme catalyses 17-O-acetylnorajmaline + H2O = norajmaline + acetate + H(+). It carries out the reaction 17-O-acetylajmaline + H2O = ajmaline + acetate + H(+). It participates in alkaloid biosynthesis; ajmaline biosynthesis. Its function is as follows. Acetylesterase involved in the biosynthesis of ajmaline-type monoterpenoid indole alkaloids (MIAs) natural products, important plant-derived pharmaceuticals used in the therapy of heart disorders. Deacetylates 17-O-acetylnorajmaline to produce norajmaline. May also catalyze the conversion of 17-O-acetylajmaline to ajmaline. The chain is Acetylajmalan esterase 1 from Rauvolfia serpentina (Serpentine wood).